Here is a 930-residue protein sequence, read N- to C-terminus: Translation initiation factor IF-2 (930 aa).

The disordered stretch occupies residues 31–317; sequence FVKSASSTVE…RKSKRAKRAE (287 aa). The span at 61 to 78 shows a compositional bias: low complexity; that stretch reads PAAGASNGAPAKPSAPGA. 2 stretches are compositionally biased toward pro residues: residues 79 to 99 and 108 to 120; these read RPGP…PAPA and PAAP…PPAP. Over residues 121–135 the composition is skewed to low complexity; sequence AASAAPPSAPEAPSA. Composition is skewed to pro residues over residues 136–158 and 178–192; these read RPTP…PAPR and PRPQ…PRPG. The span at 193–205 shows a compositional bias: gly residues; that stretch reads PGAGGPRPGGGPR. The span at 212 to 242 shows a compositional bias: pro residues; sequence NMPPRPVGGPRPGGGPRPGGGPRPGAGPRPT. Residues 244-301 are compositionally biased toward gly residues; the sequence is GGAGRPGGGGGGNYRGGGAGGGGGAGGAAAGGFRGRPGGGGGRPGQRGGAAGAFGRPG. Residues 305-314 are compositionally biased toward basic residues; it reads KRGRKSKRAK. In terms of domain architecture, tr-type G spans 426–598; sequence FRPPVVTVMG…VVLTADASLD (173 aa). The segment at 435-442 is G1; the sequence is GHVDHGKT. 435–442 is a binding site for GTP; the sequence is GHVDHGKT. Residues 460–464 form a G2 region; sequence GITQH. Residues 485-488 form a G3 region; sequence DTPG. Residues 485-489 and 539-542 each bind GTP; these read DTPGH and NKID. The segment at 539–542 is G4; that stretch reads NKID. Residues 575-577 are G5; that stretch reads SAK.

This sequence belongs to the TRAFAC class translation factor GTPase superfamily. Classic translation factor GTPase family. IF-2 subfamily.

The protein localises to the cytoplasm. Its function is as follows. One of the essential components for the initiation of protein synthesis. Protects formylmethionyl-tRNA from spontaneous hydrolysis and promotes its binding to the 30S ribosomal subunits. Also involved in the hydrolysis of GTP during the formation of the 70S ribosomal complex. The polypeptide is Translation initiation factor IF-2 (Mycolicibacterium gilvum (strain PYR-GCK) (Mycobacterium gilvum (strain PYR-GCK))).